A 516-amino-acid chain; its full sequence is MLNPKVAYMVWMTCLGLMLPSQAQSNDYRPSYHFTPDQYWMNEPNGLIKIGSTWHLFFQHNPTANVWGNICWGHATSTDLMHWAHKPTAIADENGVEAFTGTAYYDPNNTSGLGDSANPPYLAWFTGYTTSSQTQDQRLAFSVDNGATWTKFQGNPIISTSQEAPHDITGGLESRDPKVFFHRQSGNWIMVLAHGGQDKLSFWTSADTINWTWQSDLKSTSINGLSSDITGWEVPDMFELPVEGTEETTWVVMMTPAEGSPAGGNGVLAITGSFDGKSFTADPVDASTMWLDNGRDFDGALSWVNVPASDGRRIIAAVMNSYGSNPPTTTWKGMLSFPRTLSLKKVGTQQHFVQQPITELDTISTSLQTLANQTITPGQTLLSSIRGTALDVRVAFYPDAGSVLSLAVRKGASEQTVINYTQSDATLSVDRTESGDISYDPAAGGVHTAKLEEDGTGLVSIRVLVDTCSVEVFGGQGEAVISDLIFPSDSSDGLALEVTGGNAVLQSVDVRSVSLE.

Residues 1–25 form the signal peptide; it reads MLNPKVAYMVWMTCLGLMLPSQAQS. Substrate contacts are provided by residues 40–43, Q59, W67, and 99–100; these read WMNE and FT. E43 is a catalytic residue. Residue N109 is glycosylated (N-linked (GlcNAc...) asparagine). Residue 175–176 participates in substrate binding; it reads RD. Residue N210 is glycosylated (N-linked (GlcNAc...) asparagine). E233 provides a ligand contact to substrate. Residues N372 and N419 are each glycosylated (N-linked (GlcNAc...) asparagine).

The protein belongs to the glycosyl hydrolase 32 family.

It is found in the secreted. The enzyme catalyses Endohydrolysis of (2-&gt;1)-beta-D-fructosidic linkages in inulin.. Its activity is regulated as follows. Activity is stimulated by Mn(2+), Fe(2+) Ca(2+) metal ions and DTT; and inhibited by glucose, Mg(2+), Zn(2+), Cu(2+), Hg(2+), Al(3+), and Fe(3+). Functionally, endo-inulinase involved in utilization of the plant storage polymer inulin, consisting of fructooligosaccharides with a degree of polymerization (DP) value from 2 to 60. The polypeptide is Extracellular endo-inulinase inuA (inuA) (Aspergillus niger).